The following is a 975-amino-acid chain: Homeobox protein cut-like 1 (975 aa).

The segment at residues 1–73 is a DNA-binding region (CUT 1); the sequence is SRQVKEQLIK…ILALRSIQGR (73 aa). 2 disordered regions span residues 90-113 and 126-148; these read PKRRNGSEGNITTRIRASETGSDE and LQVQKTAEPAQPSSTSSSGTSDD. A coiled-coil region spans residues 113-169; it reads EAIKSILEQAKRELQVQKTAEPAQPSSTSSSGTSDDAIRSILQQARREMEAQQAALD. Residue serine 207 is modified to Phosphoserine. The disordered stretch occupies residues 209 to 246; it reads KKPPTAPDTSASTLPNPPALKKESQDAPGLDLPGAAES. Residues lysine 229, lysine 255, and lysine 286 each participate in a glycyl lysine isopeptide (Lys-Gly) (interchain with G-Cter in SUMO2) cross-link. Basic and acidic residues predominate over residues 262–297; it reads GVWKDHWWSTVQPERKSAAPPEDAKSEEAGGTKEKG. The disordered stretch occupies residues 262 to 369; that stretch reads GVWKDHWWST…SKPAKPSVPP (108 aa). Over residues 328-351 the composition is skewed to polar residues; that stretch reads RTPQSSELSLTGASRSETPQNSPL. Serine 349 carries the post-translational modification Phosphoserine. The segment at residues 374-461 is a DNA-binding region (CUT 2); the sequence is QYEIYMYQEV…QGVLPVQGQQ (88 aa). Positions 476–489 are enriched in polar residues; sequence LQQGCVSSESTPKT. The segment at 476-549 is disordered; sequence LQQGCVSSES…SQPATPLPLS (74 aa). Over residues 490–506 the composition is skewed to low complexity; that stretch reads SASCSPAPESPMSSSES. Phosphoserine is present on residues serine 499 and serine 509. A DNA-binding region (CUT 3) is located at residues 557-644; that stretch reads QELVAMSPEL…VEKLMDMKRM (88 aa). Residues 652 to 687 are disordered; that stretch reads RRHSSVSDSQPCEPPSVGIDYSQGASPQPQHQLKKP. The segment at residues 684–743 is a DNA-binding region (homeobox); the sequence is LKKPRVVLAPEEKEALKRAYQQKPYPSPKTIEELATQLNLKTSTVINWFHNYRSRIRREL. Serine 710 is modified (phosphoserine). Residue lysine 724 forms a Glycyl lysine isopeptide (Lys-Gly) (interchain with G-Cter in SUMO2) linkage. Residues 752–949 are disordered; it reads SQGQAGARHS…DSRDNPLRKK (198 aa). Positions 756-773 are enriched in low complexity; it reads AGARHSPSARSSGAAPSS. Serine 777 is modified (phosphoserine). Residues 780 to 813 are compositionally biased toward low complexity; the sequence is GVEAAEGPGAADAEESAPAAAAKSQGGPAEAAVA. Residues 838-847 are compositionally biased toward gly residues; it reads PGRRGGGGPA. The segment covering 850–860 has biased composition (low complexity); the sequence is APAAPAAAARG. A compositionally biased stretch (basic residues) spans 861–890; it reads PSRRPGARAKPRRRRRRRRRHARGGGRRYL. Residues 907–929 show a composition bias toward low complexity; sequence RSSALPSTSAPAAARRPSSLQSL. Serine 925 is subject to Phosphoserine. Over residues 937–946 the composition is skewed to basic and acidic residues; that stretch reads GARDSRDNPL. Phosphoserine is present on residues serine 956 and serine 966.

The protein belongs to the CUT homeobox family. In terms of assembly, interacts with BANP. As cells progress into S phase, a fraction of CUX1 molecules is proteolytically processed into N-terminally truncated proteins of 110 kDa by CTSL. Cell cycle-dependent processing of CUX1 serves to generate a CDP/Cux p110 with distinct DNA binding and transcriptional properties. Post-translationally, phosphorylated by PKA. In terms of tissue distribution, a broad pattern of expression observed in tissues of diverse origins, such as cartilage, liver, brain, lung, heart and skeletal muscle. There are 2 distinct protein species: the larger one (230-250 kDa) is found mainly in adult brain, lung and heart, and the smaller one (180-190 kDa) predominates in early embryonic tissues.

Its subcellular location is the nucleus. In terms of biological role, transcription factor involved in the control of neuronal differentiation in the brain. Regulates dendrite development and branching, and dendritic spine formation in cortical layers II-III. Also involved in the control of synaptogenesis. In addition, it has probably a broad role in mammalian development as a repressor of developmentally regulated gene expression. May act by preventing binding of positively-activing CCAAT factors to promoters. Component of nf-munr repressor; binds to the matrix attachment regions (MARs) (5' and 3') of the immunoglobulin heavy chain enhancer. Represses T-cell receptor (TCR) beta enhancer function by binding to MARbeta, an ATC-rich DNA sequence located upstream of the TCR beta enhancer. Binds to the TH enhancer; may require the basic helix-loop-helix protein TCF4 as a coactivator. Functionally, plays a role in cell cycle progression, in particular at the G1/S transition. As cells progress into S phase, a fraction of CUX1 molecules is proteolytically processed into N-terminally truncated proteins of 110 kDa. While CUX1 only transiently binds to DNA and carries the CCAAT-displacement activity, CDP/Cux p110 makes a stable interaction with DNA and stimulates expression of genes such as POLA1. This chain is Homeobox protein cut-like 1 (CUX1), found in Canis lupus familiaris (Dog).